The chain runs to 81 residues: Polcalcin Syr v 3 (81 aa).

2 EF-hand domains span residues 3 to 38 and 41 to 73; these read EEVA…LGSV and EEIQ…NSGL. Residues Asp-16, Asn-18, Asp-20, Lys-22, Glu-27, Asp-51, Asp-53, Asp-55, and Glu-62 each coordinate Ca(2+).

The chain is Polcalcin Syr v 3 (SYRV3) from Syringa vulgaris (Common lilac).